Consider the following 318-residue polypeptide: Na(+)-translocating NADH-quinone reductase subunit C (318 aa).

A helical transmembrane segment spans residues 13–33 (WYIILFIFVLSLVAGTLLSSV). T281 carries the FMN phosphoryl threonine modification.

This sequence belongs to the NqrC family. As to quaternary structure, composed of six subunits; NqrA, NqrB, NqrC, NqrD, NqrE and NqrF. The cofactor is FMN.

The protein localises to the cell inner membrane. The enzyme catalyses a ubiquinone + n Na(+)(in) + NADH + H(+) = a ubiquinol + n Na(+)(out) + NAD(+). In terms of biological role, NQR complex catalyzes the reduction of ubiquinone-1 to ubiquinol by two successive reactions, coupled with the transport of Na(+) ions from the cytoplasm to the periplasm. NqrA to NqrE are probably involved in the second step, the conversion of ubisemiquinone to ubiquinol. This is Na(+)-translocating NADH-quinone reductase subunit C from Chlamydia muridarum (strain MoPn / Nigg).